The chain runs to 37 residues: Large ribosomal subunit protein bL36 (37 aa).

The protein belongs to the bacterial ribosomal protein bL36 family.

The polypeptide is Large ribosomal subunit protein bL36 (Paracidovorax citrulli (strain AAC00-1) (Acidovorax citrulli)).